Here is a 307-residue protein sequence, read N- to C-terminus: Protoheme IX farnesyltransferase (307 aa).

8 helical membrane passes run 32–52 (VVELLLVTTVPTMILAARGIP), 54–74 (LWLVLATVVGGYMSAGSAGAF), 105–125 (LVFAWALGVASVLVLGFFTNW), 126–146 (LAAGLSVAAILIYVVFYTLIL), 169–189 (WAVVTNSVGWAPVILFGVIFL), 222–242 (VVGLQVVLYAWAMVACSLLLI), 244–264 (VARMGVLYTAVALVAGGWFLY), and 287–307 (GSIAYLTLIFLAVAIDPLLPF).

The protein belongs to the UbiA prenyltransferase family. Protoheme IX farnesyltransferase subfamily.

Its subcellular location is the cell membrane. The catalysed reaction is heme b + (2E,6E)-farnesyl diphosphate + H2O = Fe(II)-heme o + diphosphate. Its pathway is porphyrin-containing compound metabolism; heme O biosynthesis; heme O from protoheme: step 1/1. Its function is as follows. Converts heme B (protoheme IX) to heme O by substitution of the vinyl group on carbon 2 of heme B porphyrin ring with a hydroxyethyl farnesyl side group. In Leifsonia xyli subsp. xyli (strain CTCB07), this protein is Protoheme IX farnesyltransferase.